Here is a 346-residue protein sequence, read N- to C-terminus: Probable choline kinase 1 (346 aa).

3 residues coordinate ATP: arginine 73, glutamine 210, and aspartate 227.

This sequence belongs to the choline/ethanolamine kinase family. In terms of tissue distribution, expressed in roots. Expressed at low levels in cauline leaves and flowers.

It catalyses the reaction choline + ATP = phosphocholine + ADP + H(+). It participates in phospholipid metabolism; phosphatidylcholine biosynthesis; phosphocholine from choline: step 1/1. In terms of biological role, involved in phospholipid biosynthesis. Catalyzes the first step in phosphatidylcholine biosynthesis. This is Probable choline kinase 1 (CK1) from Arabidopsis thaliana (Mouse-ear cress).